Reading from the N-terminus, the 454-residue chain is tRNA modification GTPase MnmE (454 aa).

(6S)-5-formyl-5,6,7,8-tetrahydrofolate is bound by residues Arg-23, Glu-80, and Lys-120. Positions 216-377 constitute a TrmE-type G domain; sequence GMKVVIAGRP…LRNHLKQSMG (162 aa). Asn-226 is a K(+) binding site. GTP-binding positions include 226–231, 245–251, 270–273, 335–338, and 358–360; these read NAGKSS, TDIAGTT, DTAG, NKAD, and SAR. Ser-230 serves as a coordination point for Mg(2+). K(+)-binding residues include Thr-245, Ile-247, and Thr-250. Thr-251 lines the Mg(2+) pocket. Lys-454 provides a ligand contact to (6S)-5-formyl-5,6,7,8-tetrahydrofolate.

Belongs to the TRAFAC class TrmE-Era-EngA-EngB-Septin-like GTPase superfamily. TrmE GTPase family. Homodimer. Heterotetramer of two MnmE and two MnmG subunits. It depends on K(+) as a cofactor.

It localises to the cytoplasm. In terms of biological role, exhibits a very high intrinsic GTPase hydrolysis rate. Involved in the addition of a carboxymethylaminomethyl (cmnm) group at the wobble position (U34) of certain tRNAs, forming tRNA-cmnm(5)s(2)U34. The sequence is that of tRNA modification GTPase MnmE from Shigella boydii serotype 18 (strain CDC 3083-94 / BS512).